The following is a 205-amino-acid chain: MIAKLKGILDSITDSYLIIDINGVGYQVYSSGKTLMKLIKEEGSIVSLFIETHVREDRIHLFGFLDNTEKVAFNMLQSVSGIGTKMALHILSNLTPHQLQIAISSQNRHQLKAISGVGPKLIDRLMIELRDKVANINTIANNTSLAILSTDSNTHDNILSDAITALIALGISRAEATQILSDIYALFPSISVNELVRTALQRRAK.

The segment at 1-65 (MIAKLKGILD…EDRIHLFGFL (65 aa)) is domain I. The interval 66-144 (DNTEKVAFNM…NINTIANNTS (79 aa)) is domain II. Residues 145–153 (LAILSTDSN) form a flexible linker region. The tract at residues 154-205 (THDNILSDAITALIALGISRAEATQILSDIYALFPSISVNELVRTALQRRAK) is domain III.

The protein belongs to the RuvA family. In terms of assembly, homotetramer. Forms an RuvA(8)-RuvB(12)-Holliday junction (HJ) complex. HJ DNA is sandwiched between 2 RuvA tetramers; dsDNA enters through RuvA and exits via RuvB. An RuvB hexamer assembles on each DNA strand where it exits the tetramer. Each RuvB hexamer is contacted by two RuvA subunits (via domain III) on 2 adjacent RuvB subunits; this complex drives branch migration. In the full resolvosome a probable DNA-RuvA(4)-RuvB(12)-RuvC(2) complex forms which resolves the HJ.

The protein localises to the cytoplasm. The RuvA-RuvB-RuvC complex processes Holliday junction (HJ) DNA during genetic recombination and DNA repair, while the RuvA-RuvB complex plays an important role in the rescue of blocked DNA replication forks via replication fork reversal (RFR). RuvA specifically binds to HJ cruciform DNA, conferring on it an open structure. The RuvB hexamer acts as an ATP-dependent pump, pulling dsDNA into and through the RuvAB complex. HJ branch migration allows RuvC to scan DNA until it finds its consensus sequence, where it cleaves and resolves the cruciform DNA. The chain is Holliday junction branch migration complex subunit RuvA from Orientia tsutsugamushi (strain Boryong) (Rickettsia tsutsugamushi).